Reading from the N-terminus, the 553-residue chain is General alpha-glucoside permease (553 aa).

The segment covering 1-21 has biased composition (polar residues); it reads MSVDENQLENGQLLSSENEAS. The interval 1 to 26 is disordered; the sequence is MSVDENQLENGQLLSSENEASSPFKE. The Cytoplasmic segment spans residues 1–33; it reads MSVDENQLENGQLLSSENEASSPFKESIPSRSS. The helical transmembrane segment at 34-54 threads the bilayer; the sequence is LYLIALTVSLLGVQLTWSVEL. Over 55–72 the chain is Extracellular; it reads GYGTPYLFSLGLRKEWTS. A helical transmembrane segment spans residues 73–93; the sequence is IIWIAGPLTGILIQPIAGILS. Residues 94–111 lie on the Cytoplasmic side of the membrane; sequence DRVNSRIGRRRPFMLCAS. A helical membrane pass occupies residues 112 to 132; sequence LLGTFSLFLMGWAPDICLFIF. At 133–140 the chain is on the extracellular side; the sequence is SNEVLMKR. The helical transmembrane segment at 141 to 161 threads the bilayer; it reads VTIVLATISIYLLDVAVNVVM. Residues 162–186 lie on the Cytoplasmic side of the membrane; that stretch reads ASTRSLIVDSVRSDQQHEANSWAGR. The helical transmembrane segment at 187-207 threads the bilayer; sequence MIGVGNVLGYLLGYLPLYRIF. Over 208 to 216 the chain is Extracellular; sequence SFLNFTQLQ. The chain crosses the membrane as a helical span at residues 217–237; that stretch reads VFCVLASISLVLTVTITTIFV. The Cytoplasmic portion of the chain corresponds to 238–280; the sequence is SERRFPPVEHEKSVAGEIFEFFTTMRQSITALPFTLKRICFVQ. A helical membrane pass occupies residues 281 to 301; it reads FFAYFGWFPFLFYITTYVGIL. Residues 302-322 are Extracellular-facing; sequence YLRHAPKGHEEDWDMATRQGS. The helical transmembrane segment at 323–343 threads the bilayer; sequence FALLLFAIISLAANTALPLLL. The Cytoplasmic segment spans residues 344–424; sequence EDTEDDEEDE…SKVQIKGLTL (81 aa). The interval 368 to 399 is disordered; the sequence is NDLGNIRTGTNTPRLGNLSETTSFRSENEPSR. Residues 374-392 show a composition bias toward polar residues; it reads RTGTNTPRLGNLSETTSFR. A helical membrane pass occupies residues 425–445; that stretch reads PILWLSSHVLFGVCMLSTIFL. The Extracellular portion of the chain corresponds to 446–452; that stretch reads QTSWQAQ. Residues 453-473 form a helical membrane-spanning segment; it reads AMVAICGLSWACTLWIPYSLF. Residues 474–494 are Cytoplasmic-facing; sequence SSEIGKLGLRESSGKMIGVHN. A helical membrane pass occupies residues 495-515; sequence VFISAPQVLSTIIATIVFIQS. Residues 516-521 lie on the Extracellular side of the membrane; sequence EGSHRD. The chain crosses the membrane as a helical span at residues 522-542; sequence IADNSIAWVLRIGGISAFLAA. Topologically, residues 543–553 are cytoplasmic; the sequence is YQCRHLLPINF.

It belongs to the glycoside-pentoside-hexuronide (GPH) cation symporter transporter (TC 2.A.2.4) family.

The protein resides in the membrane. Responsible for the transport of maltose and sucrose into the cell, with the concomitant uptake of protons (symport system). This Schizosaccharomyces pombe (strain 972 / ATCC 24843) (Fission yeast) protein is General alpha-glucoside permease (sut1).